Reading from the N-terminus, the 139-residue chain is Large ribosomal subunit protein uL16 (139 aa).

The protein belongs to the universal ribosomal protein uL16 family. As to quaternary structure, part of the 50S ribosomal subunit.

Functionally, binds 23S rRNA and is also seen to make contacts with the A and possibly P site tRNAs. The protein is Large ribosomal subunit protein uL16 of Synechocystis sp. (strain ATCC 27184 / PCC 6803 / Kazusa).